The primary structure comprises 365 residues: tRNA N6-adenosine threonylcarbamoyltransferase (365 aa).

Residues His119 and His123 each contribute to the Fe cation site. Residues 141-145 (LVSGG), Asp174, Gly187, and Asn289 each bind substrate. Asp317 serves as a coordination point for Fe cation. The segment at 342–365 (ARPRWPLDSKSPAMLGSGKKGAKA) is disordered.

It belongs to the KAE1 / TsaD family. Fe(2+) is required as a cofactor.

It is found in the cytoplasm. The enzyme catalyses L-threonylcarbamoyladenylate + adenosine(37) in tRNA = N(6)-L-threonylcarbamoyladenosine(37) in tRNA + AMP + H(+). Its function is as follows. Required for the formation of a threonylcarbamoyl group on adenosine at position 37 (t(6)A37) in tRNAs that read codons beginning with adenine. Is involved in the transfer of the threonylcarbamoyl moiety of threonylcarbamoyl-AMP (TC-AMP) to the N6 group of A37, together with TsaE and TsaB. TsaD likely plays a direct catalytic role in this reaction. The sequence is that of tRNA N6-adenosine threonylcarbamoyltransferase from Roseobacter denitrificans (strain ATCC 33942 / OCh 114) (Erythrobacter sp. (strain OCh 114)).